The primary structure comprises 148 residues: Lysozyme C (148 aa).

The first 18 residues, 1 to 18 (MKALIILGLVLLSVTVQG), serve as a signal peptide directing secretion. Residues 19-148 (KIFERCELAR…VSQYVEGCGV (130 aa)) enclose the C-type lysozyme domain. 4 cysteine pairs are disulfide-bonded: Cys-24–Cys-146, Cys-48–Cys-134, Cys-83–Cys-99, and Cys-95–Cys-113. Catalysis depends on residues Glu-53 and Asp-71.

Belongs to the glycosyl hydrolase 22 family. Monomer.

It carries out the reaction Hydrolysis of (1-&gt;4)-beta-linkages between N-acetylmuramic acid and N-acetyl-D-glucosamine residues in a peptidoglycan and between N-acetyl-D-glucosamine residues in chitodextrins.. In terms of biological role, lysozymes have primarily a bacteriolytic function; those in tissues and body fluids are associated with the monocyte-macrophage system and enhance the activity of immunoagents. This Colobus angolensis (Angolan colobus) protein is Lysozyme C (LYZ).